A 730-amino-acid chain; its full sequence is DNA ligase (730 aa).

A disordered region spans residues 1–23 (MAGEQHAQPTSVPAEAREKHAQL). NAD(+) contacts are provided by residues 44–48 (DAEFD), 93–94 (SL), and E124. The active-site N6-AMP-lysine intermediate is K126. NAD(+) contacts are provided by R147, E184, K300, and K324. Zn(2+)-binding residues include C418, C421, C437, and C443. The region spanning 638 to 727 (EGPRPLEGLT…PEAAAEVALP (90 aa)) is the BRCT domain.

This sequence belongs to the NAD-dependent DNA ligase family. LigA subfamily. The cofactor is Mg(2+). Requires Mn(2+) as cofactor.

The catalysed reaction is NAD(+) + (deoxyribonucleotide)n-3'-hydroxyl + 5'-phospho-(deoxyribonucleotide)m = (deoxyribonucleotide)n+m + AMP + beta-nicotinamide D-nucleotide.. Functionally, DNA ligase that catalyzes the formation of phosphodiester linkages between 5'-phosphoryl and 3'-hydroxyl groups in double-stranded DNA using NAD as a coenzyme and as the energy source for the reaction. It is essential for DNA replication and repair of damaged DNA. The polypeptide is DNA ligase (Streptomyces avermitilis (strain ATCC 31267 / DSM 46492 / JCM 5070 / NBRC 14893 / NCIMB 12804 / NRRL 8165 / MA-4680)).